Here is a 449-residue protein sequence, read N- to C-terminus: Probable rhamnogalacturonase E (449 aa).

The N-terminal stretch at 1–21 is a signal peptide; sequence MRSKTFSVLSSCLLLIATVQG. A disulfide bridge connects residues Cys42 and Cys68. N-linked (GlcNAc...) asparagine glycans are attached at residues Asn53, Asn91, and Asn106. Asp221 functions as the Proton donor in the catalytic mechanism. Cysteines 223 and 240 form a disulfide. N-linked (GlcNAc...) asparagine glycans are attached at residues Asn241 and Asn256. Residue His296 is part of the active site. Residue Asn323 is glycosylated (N-linked (GlcNAc...) asparagine). 2 cysteine pairs are disulfide-bonded: Cys346/Cys352 and Cys374/Cys383.

This sequence belongs to the glycosyl hydrolase 28 family.

Its subcellular location is the secreted. It catalyses the reaction Endohydrolysis of alpha-D-GalA-(1-&gt;2)-alpha-L-Rha glycosidic bond in the rhamnogalacturonan I backbone with initial inversion of anomeric configuration releasing oligosaccharides with beta-D-GalA at the reducing end.. In terms of biological role, pectinolytic enzymes consist of four classes of enzymes: pectine lyase, polygalacturonase, pectin methylesterase and rhamnogalacturonase. Hydrolyzes alpha-D-galacturonopyranosyl-(1,2)-alpha-L-rhamnopyranosyl linkages in the backbone of the hairy regions of pectins. The sequence is that of Probable rhamnogalacturonase E (rhgE) from Aspergillus flavus (strain ATCC 200026 / FGSC A1120 / IAM 13836 / NRRL 3357 / JCM 12722 / SRRC 167).